A 404-amino-acid polypeptide reads, in one-letter code: Protrudin (404 aa).

Residues 1–25 (MQSSDRDLSGPEASPSVMPEVLSEC) form a disordered region. At 1–63 (MQSSDRDLSG…LKDAGDGVRY (63 aa)) the chain is on the cytoplasmic side. A sufficient for homooligomerization region spans residues 1 to 92 (MQSSDRDLSG…LFLTLNEGAW (92 aa)). The tract at residues 1–205 (MQSSDRDLSG…LYLLPLCWVL (205 aa)) is sufficient for localization to endoplasmic reticulum tubular network and for interactions with REEP1, REEP5, ATL1, ATL2, ATL3 and SPAST. Residues 51–64 (LEPLKDAGDGVRYL) are necessary for interaction with RAB11A and function in neurite outgrowth. The helical transmembrane segment at 64 to 85 (LLRWQMPLCSLLTCLGLNILFL) threads the bilayer. Residues 86 to 90 (TLNEG) lie on the Lumenal side of the membrane. The chain crosses the membrane as a helical span at residues 91 to 109 (AWYSVGALIISVPALLGYL). Over 110-187 (QEVCRAQLPE…NPVVSSQFYG (78 aa)) the chain is Cytoplasmic. Positions 188 to 208 (ALLGMVCMLYLLPLCWVLALL) form an intramembrane region, helical. Residues 209–404 (NSTLFLGNGE…CASCNQTLSK (196 aa)) lie on the Cytoplasmic side of the membrane. The tract at residues 259–299 (DSTPAPTPTEDLTPGSVEEAEEAEPDEEFKDAIEEDDEGTP) is disordered. The interval 271–354 (TPGSVEEAEE…GCAATFSVLK (84 aa)) is necessary for interaction with KIF5A. The span at 276–299 (EEAEEAEPDEEFKDAIEEDDEGTP) shows a compositional bias: acidic residues. Positions 286-292 (EFKDAIE) are necessary for interaction with VAPA. The FYVE-type zinc finger occupies 337-403 (TNNFGNCAGC…VCASCNQTLS (67 aa)). 8 residues coordinate Zn(2+): C343, C346, C359, C362, C367, C370, C395, and C398.

In terms of assembly, can form homooligomers (monomers, dimers and tetramers). Interacts with FKBP8; may negatively regulate ZFYVE27 phosphorylation. Interacts with VAPA (via MSP domain); may regulate ZFYVE27 retention in the endoplasmic reticulum and its function in cell projections formation. Interacts with VAPB (via MSP domain). Interacts with RAB11A (GDP-bound form); regulates RAB11A. Interacts with RAB11B (GDP-bound form), REEP1, REEP5, ATL1, ATL2, ATL3, SPAST, SURF4, KIF5A, KIF5B, KIF5C and RTN3. Phosphorylated. Phosphorylation is induced by NGF through the MAPK/ERK pathway and modulates interaction with RAB11A.

It localises to the recycling endosome membrane. The protein resides in the endoplasmic reticulum membrane. The protein localises to the cell projection. Its subcellular location is the growth cone membrane. In terms of biological role, key regulator of RAB11-dependent vesicular trafficking during neurite extension through polarized membrane transport. Promotes axonal elongation and contributes to the establishment of neuronal cell polarity. Involved in nerve growth factor-induced neurite formation in VAPA-dependent manner. Contributes to both the formation and stabilization of the tubular ER network. Involved in ER morphogenesis by regulating the sheet-to-tubule balance and possibly the density of tubule interconnections. Acts as an adapter protein that facilitates the interaction of KIF5A with VAPA, VAPB, SURF4, RAB11A, RAB11B and RTN3 and the ZFYVE27-KIF5A complex contributes to the transport of these proteins in neurons. Can induce formation of neurite-like membrane protrusions in non-neuronal cells in a KIF5A/B-dependent manner. The polypeptide is Protrudin (Zfyve27) (Rattus norvegicus (Rat)).